Consider the following 360-residue polypeptide: Mannose-1-phosphate guanylyltransferase catalytic subunit beta (360 aa).

Residues 2-222 (KALILVGGYG…QGFWMDIGQP (221 aa)) form a substrate-binding domain region. Aspartate 110 is a binding site for GDP-alpha-D-mannose. Aspartate 110 lines the Mg(2+) pocket. The active site involves lysine 162. Aspartate 218 contributes to the GDP-alpha-D-mannose binding site. Aspartate 218 contributes to the Mg(2+) binding site. The interval 245–360 (RAGPGFLGNV…DSVPEPRIIM (116 aa)) is hexapeptide repeat domain.

This sequence belongs to the transferase hexapeptide repeat family. In terms of assembly, component of the GMPPA-GMPPB mannose-1-phosphate guanylyltransferase complex composed of 4 gmppa subunits and 8 gmppb subunits; the complex is organized into three layers, a central layer made up of 2 gmppa dimers sandwiched between two layers each made up of 2 gmppb dimers. Catalytic activity of gmppb is reduced when part of the complex and binding of GDP-alpha-D-Mannose by gmppa induces allosteric feedback inhibition of gmppb. Mg(2+) is required as a cofactor.

The enzyme catalyses alpha-D-mannose 1-phosphate + GTP + H(+) = GDP-alpha-D-mannose + diphosphate. The protein operates within nucleotide-sugar biosynthesis; GDP-alpha-D-mannose biosynthesis; GDP-alpha-D-mannose from alpha-D-mannose 1-phosphate (GTP route): step 1/1. With respect to regulation, enzyme activity is reduced by incorporation into the GMPPA-GMPPB mannose-1-phosphate guanylyltransferase complex. Allosterically inhibited, when part of the GMPPA-GMPPB complex, by GDP-alpha-D-mannose binding to GMPPA. Catalytic subunit of the GMPPA-GMPPB mannose-1-phosphate guanylyltransferase complex. Catalyzes the formation of GDP-mannose, an essential precursor of glycan moieties of glycoproteins and glycolipids. Can catalyze the reverse reaction in vitro. Together with GMPPA regulates GDP-alpha-D-mannose levels. In Danio rerio (Zebrafish), this protein is Mannose-1-phosphate guanylyltransferase catalytic subunit beta (gmppb).